The chain runs to 609 residues: Glutamine--fructose-6-phosphate aminotransferase [isomerizing] (609 aa).

The Nucleophile; for GATase activity role is filled by C2. One can recognise a Glutamine amidotransferase type-2 domain in the interval 2-217; it reads CGIVGAIAGR…DGDTAEIRRD (216 aa). SIS domains lie at 285 to 425 and 458 to 599; these read AESV…LRGA and WAEC…VDKP. The active-site For Fru-6P isomerization activity is K604.

In terms of assembly, homodimer.

The protein resides in the cytoplasm. The enzyme catalyses D-fructose 6-phosphate + L-glutamine = D-glucosamine 6-phosphate + L-glutamate. Catalyzes the first step in hexosamine metabolism, converting fructose-6P into glucosamine-6P using glutamine as a nitrogen source. The chain is Glutamine--fructose-6-phosphate aminotransferase [isomerizing] from Xylella fastidiosa (strain 9a5c).